A 361-amino-acid chain; its full sequence is Mitochondrial import receptor subunit TOM40 homolog (361 aa).

A compositionally biased stretch (low complexity) spans methionine 1–proline 10. Residues methionine 1–aspartate 71 form a disordered region. Positions proline 11–threonine 36 are enriched in pro residues. A compositionally biased stretch (gly residues) spans leucine 40–arginine 52. Residues glycine 59–aspartate 71 are compositionally biased toward low complexity.

Belongs to the Tom40 family. As to quaternary structure, forms part of the preprotein translocase complex of the outer mitochondrial membrane (TOM complex) which consists of at least 7 different proteins (TOMM5, TOMM6, TOMM7, TOMM20, TOMM22, TOMM40 and TOMM70). Interacts with mitochondrial targeting sequences. Interacts with TIMM29; linking the TIM22 complex to the TOM complex. Forms a complex with BCAP31 (via C-terminus) which mediates the translocation of components of the mitochondrial membrane respiratory chain NADH dehydrogenase (Complex I) from the cytosol to the mitochondria. Interacts (via N-terminus) with CYP1A1 (via mitochondrial targeting signal); this interaction is required for CYP1A1 translocation across the mitochondrial outer membrane.

The protein localises to the mitochondrion outer membrane. Channel-forming protein essential for import of protein precursors into mitochondria. Plays a role in the assembly of the mitochondrial membrane respiratory chain NADH dehydrogenase (Complex I) by forming a complex with BCAP31 and mediating the translocation of Complex I components from the cytosol to the mitochondria. This chain is Mitochondrial import receptor subunit TOM40 homolog, found in Bos taurus (Bovine).